Consider the following 492-residue polypeptide: Glutamyl-tRNA(Gln) amidotransferase subunit A (492 aa).

Active-site charge relay system residues include lysine 80 and serine 155. Serine 179 functions as the Acyl-ester intermediate in the catalytic mechanism.

The protein belongs to the amidase family. GatA subfamily. Heterotrimer of A, B and C subunits.

The enzyme catalyses L-glutamyl-tRNA(Gln) + L-glutamine + ATP + H2O = L-glutaminyl-tRNA(Gln) + L-glutamate + ADP + phosphate + H(+). In terms of biological role, allows the formation of correctly charged Gln-tRNA(Gln) through the transamidation of misacylated Glu-tRNA(Gln) in organisms which lack glutaminyl-tRNA synthetase. The reaction takes place in the presence of glutamine and ATP through an activated gamma-phospho-Glu-tRNA(Gln). This chain is Glutamyl-tRNA(Gln) amidotransferase subunit A, found in Mycobacteroides abscessus (strain ATCC 19977 / DSM 44196 / CCUG 20993 / CIP 104536 / JCM 13569 / NCTC 13031 / TMC 1543 / L948) (Mycobacterium abscessus).